We begin with the raw amino-acid sequence, 390 residues long: GTPase Obg (390 aa).

The Obg domain occupies 1–159 (MKFVDEATIK…RELRLELLLL (159 aa)). The OBG-type G domain occupies 160–333 (ADVGMLGLPN…LCDELADFMD (174 aa)). Residues 166–173 (GLPNAGKS), 191–195 (FTTLI), 213–216 (DIPG), 283–286 (NKTD), and 314–316 (AAV) contribute to the GTP site. Mg(2+) is bound by residues S173 and T193.

It belongs to the TRAFAC class OBG-HflX-like GTPase superfamily. OBG GTPase family. Monomer. Mg(2+) is required as a cofactor.

The protein localises to the cytoplasm. An essential GTPase which binds GTP, GDP and possibly (p)ppGpp with moderate affinity, with high nucleotide exchange rates and a fairly low GTP hydrolysis rate. Plays a role in control of the cell cycle, stress response, ribosome biogenesis and in those bacteria that undergo differentiation, in morphogenesis control. The sequence is that of GTPase Obg from Aliivibrio fischeri (strain ATCC 700601 / ES114) (Vibrio fischeri).